The sequence spans 199 residues: Large ribosomal subunit protein uL13A (199 aa).

S2 bears the N-acetylserine mark. K177 is covalently cross-linked (Glycyl lysine isopeptide (Lys-Gly) (interchain with G-Cter in ubiquitin)).

The protein belongs to the universal ribosomal protein uL13 family. In terms of assembly, component of the large ribosomal subunit (LSU). Mature yeast ribosomes consist of a small (40S) and a large (60S) subunit. The 40S small subunit contains 1 molecule of ribosomal RNA (18S rRNA) and 33 different proteins (encoded by 57 genes). The large 60S subunit contains 3 rRNA molecules (25S, 5.8S and 5S rRNA) and 46 different proteins (encoded by 81 genes). In terms of processing, N-terminally acetylated by acetyltransferase NatA.

The protein resides in the cytoplasm. Component of the ribosome, a large ribonucleoprotein complex responsible for the synthesis of proteins in the cell. The small ribosomal subunit (SSU) binds messenger RNAs (mRNAs) and translates the encoded message by selecting cognate aminoacyl-transfer RNA (tRNA) molecules. The large subunit (LSU) contains the ribosomal catalytic site termed the peptidyl transferase center (PTC), which catalyzes the formation of peptide bonds, thereby polymerizing the amino acids delivered by tRNAs into a polypeptide chain. The nascent polypeptides leave the ribosome through a tunnel in the LSU and interact with protein factors that function in enzymatic processing, targeting, and the membrane insertion of nascent chains at the exit of the ribosomal tunnel. The polypeptide is Large ribosomal subunit protein uL13A (Saccharomyces cerevisiae (strain ATCC 204508 / S288c) (Baker's yeast)).